Reading from the N-terminus, the 358-residue chain is 3-dehydroquinate synthase (358 aa).

NAD(+)-binding positions include 75 to 80 (SGEGSK), 109 to 113 (GVLGD), 133 to 134 (TT), Lys146, and Lys155. Zn(2+) is bound by residues Glu188, His245, and His262.

It belongs to the sugar phosphate cyclases superfamily. Dehydroquinate synthase family. Co(2+) is required as a cofactor. It depends on Zn(2+) as a cofactor. The cofactor is NAD(+).

The protein localises to the cytoplasm. It carries out the reaction 7-phospho-2-dehydro-3-deoxy-D-arabino-heptonate = 3-dehydroquinate + phosphate. It participates in metabolic intermediate biosynthesis; chorismate biosynthesis; chorismate from D-erythrose 4-phosphate and phosphoenolpyruvate: step 2/7. Catalyzes the conversion of 3-deoxy-D-arabino-heptulosonate 7-phosphate (DAHP) to dehydroquinate (DHQ). This Methylacidiphilum infernorum (isolate V4) (Methylokorus infernorum (strain V4)) protein is 3-dehydroquinate synthase.